The following is a 264-amino-acid chain: S-adenosylmethionine decarboxylase proenzyme (264 aa).

Ser-113 functions as the Schiff-base intermediate with substrate; via pyruvic acid in the catalytic mechanism. A Pyruvic acid (Ser); by autocatalysis modification is found at Ser-113. Catalysis depends on His-118, which acts as the Proton acceptor; for processing activity. Cys-141 acts as the Proton donor; for catalytic activity in catalysis.

This sequence belongs to the prokaryotic AdoMetDC family. Type 2 subfamily. As to quaternary structure, heterooctamer of four alpha and four beta chains arranged as a tetramer of alpha/beta heterodimers. It depends on pyruvate as a cofactor. Post-translationally, is synthesized initially as an inactive proenzyme. Formation of the active enzyme involves a self-maturation process in which the active site pyruvoyl group is generated from an internal serine residue via an autocatalytic post-translational modification. Two non-identical subunits are generated from the proenzyme in this reaction, and the pyruvate is formed at the N-terminus of the alpha chain, which is derived from the carboxyl end of the proenzyme. The post-translation cleavage follows an unusual pathway, termed non-hydrolytic serinolysis, in which the side chain hydroxyl group of the serine supplies its oxygen atom to form the C-terminus of the beta chain, while the remainder of the serine residue undergoes an oxidative deamination to produce ammonia and the pyruvoyl group blocking the N-terminus of the alpha chain.

It carries out the reaction S-adenosyl-L-methionine + H(+) = S-adenosyl 3-(methylsulfanyl)propylamine + CO2. The protein operates within amine and polyamine biosynthesis; S-adenosylmethioninamine biosynthesis; S-adenosylmethioninamine from S-adenosyl-L-methionine: step 1/1. Functionally, catalyzes the decarboxylation of S-adenosylmethionine to S-adenosylmethioninamine (dcAdoMet), the propylamine donor required for the synthesis of the polyamines spermine and spermidine from the diamine putrescine. The polypeptide is S-adenosylmethionine decarboxylase proenzyme (Xanthomonas oryzae pv. oryzae (strain MAFF 311018)).